A 299-amino-acid chain; its full sequence is Quinolinate synthase (299 aa).

Iminosuccinate-binding residues include H21 and S38. A [4Fe-4S] cluster-binding site is contributed by C83. Residues 109-111 and S126 each bind iminosuccinate; that span reads YVN. A [4Fe-4S] cluster-binding site is contributed by C170. Residues 196 to 198 and T213 each bind iminosuccinate; that span reads HPE. C256 contributes to the [4Fe-4S] cluster binding site.

This sequence belongs to the quinolinate synthase family. Type 2 subfamily. Requires [4Fe-4S] cluster as cofactor.

The protein resides in the cytoplasm. It catalyses the reaction iminosuccinate + dihydroxyacetone phosphate = quinolinate + phosphate + 2 H2O + H(+). Its pathway is cofactor biosynthesis; NAD(+) biosynthesis; quinolinate from iminoaspartate: step 1/1. Its function is as follows. Catalyzes the condensation of iminoaspartate with dihydroxyacetone phosphate to form quinolinate. The sequence is that of Quinolinate synthase from Pyrococcus abyssi (strain GE5 / Orsay).